We begin with the raw amino-acid sequence, 194 residues long: Lymphocyte antigen 6 complex locus protein G5b (194 aa).

The N-terminal stretch at 1-18 (MRARVLVGMLTMVGFAMG) is a signal peptide. Positions 26-118 (RTCHLCLLED…SAQHQSTLRG (93 aa)) constitute a UPAR/Ly6 domain. 5 disulfide bridges follow: C28/C55, C31/C40, C47/C73, C81/C98, and C99/C104. N-linked (GlcNAc...) asparagine glycosylation is present at N63. N141 carries an N-linked (GlcNAc...) asparagine glycan.

In terms of assembly, monomer. N-glycosylated.

The protein localises to the secreted. In Mus musculus (Mouse), this protein is Lymphocyte antigen 6 complex locus protein G5b (Ly6g5b).